A 334-amino-acid chain; its full sequence is Hydroxyproline O-arabinosyltransferase NOD3 (334 aa).

The chain crosses the membrane as a helical; Signal-anchor span at residues 1–18 (LLMVLGFFFATYNLVSMI).

The protein belongs to the RDN family.

The protein localises to the golgi apparatus membrane. It carries out the reaction trans-4-hydroxy-L-prolyl-[protein] + UDP-beta-L-arabinofuranose = O-(beta-L-arabinofuranosyl)-trans-4-hydroxy-L-prolyl-[protein] + UDP + H(+). Functionally, probable glycosyltransferase involved in the O-arabinosylation of several proteins including extensins and small signaling peptides. Catalyzes the transfer of the initial L-arabinose to the hydroxyl group of Hyp residues. Probably involved in the arabinosylation of CLAVATA3/ESR-related (CLE) signaling peptides that move from root to shoot, to interact with receptor kinase signaling that regulates nodulation. Involved in long distance nodulation signaling events. Involved in the autoregulation of nodulation (AON), a long distance systemic signaling from root to shoot and back again, which allows legumes to limit the number of root nodules formed based on available nitrogen and previous rhizobial colonization. In Pisum sativum (Garden pea), this protein is Hydroxyproline O-arabinosyltransferase NOD3.